Consider the following 226-residue polypeptide: V-type proton ATPase subunit E 2 (226 aa).

It belongs to the V-ATPase E subunit family. As to quaternary structure, V-ATPase is a heteromultimeric enzyme made up of two complexes: the ATP-hydrolytic V1 complex and the proton translocation V0 complex. The V1 complex consists of three catalytic AB heterodimers that form a heterohexamer, three peripheral stalks each consisting of EG heterodimers, one central rotor including subunits D and F, and the regulatory subunits C and H. The proton translocation complex V0 consists of the proton transport subunit a, a ring of proteolipid subunits c9c'', rotary subunit d, subunits e and f, and the accessory subunits ATP6AP1/Ac45 and ATP6AP2/PRR. In terms of tissue distribution, testis specific.

In terms of biological role, subunit of the V1 complex of vacuolar(H+)-ATPase (V-ATPase), a multisubunit enzyme composed of a peripheral complex (V1) that hydrolyzes ATP and a membrane integral complex (V0) that translocates protons. V-ATPase is responsible for acidifying and maintaining the pH of intracellular compartments and in some cell types, is targeted to the plasma membrane, where it is responsible for acidifying the extracellular environment. The chain is V-type proton ATPase subunit E 2 (ATP6V1E2) from Homo sapiens (Human).